A 65-amino-acid chain; its full sequence is Large ribosomal subunit protein bL35 (65 aa).

It belongs to the bacterial ribosomal protein bL35 family.

This is Large ribosomal subunit protein bL35 from Psychrobacter sp. (strain PRwf-1).